Here is a 190-residue protein sequence, read N- to C-terminus: Vascular endothelial growth factor A (190 aa).

Residues 1-26 (MNFLLSWVHWSLALLLYLHHAKWSQA) form the signal peptide. Cystine bridges form between Cys51–Cys93, Cys82–Cys127, and Cys86–Cys129. Asn100 carries N-linked (GlcNAc...) asparagine glycosylation.

The protein belongs to the PDGF/VEGF growth factor family. Homodimer; disulfide-linked. Also found as heterodimer with PGF. Interacts with NRP1. Interacts with isoform 2 of BSG. Interacts with CD82; this interaction inhibits VEGFA-mediated signaling pathway.

It is found in the secreted. Growth factor active in angiogenesis, vasculogenesis and endothelial cell growth. Induces endothelial cell proliferation, promotes cell migration, inhibits apoptosis and induces permeabilization of blood vessels. Binds to the FLT1/VEGFR1 and KDR/VEGFR2 receptors, heparan sulfate and heparin. Binding to NRP1 receptor initiates a signaling pathway needed for motor neuron axon guidance and cell body migration, including for the caudal migration of facial motor neurons from rhombomere 4 to rhombomere 6 during embryonic development. Also binds the DEAR/FBXW7-AS1 receptor. In Equus caballus (Horse), this protein is Vascular endothelial growth factor A (VEGFA).